The following is a 240-amino-acid chain: Dephospho-CoA kinase domain-containing protein (240 aa).

Residues 3 to 207 (LVGLTGGIAS…RSMEYLPLRL (205 aa)) form the DPCK domain. ATP is bound at residue 8 to 15 (GGIASGKS).

Belongs to the CoaE family.

The polypeptide is Dephospho-CoA kinase domain-containing protein (Dcakd) (Rattus norvegicus (Rat)).